Here is a 215-residue protein sequence, read N- to C-terminus: Small ribosomal subunit protein uS3 (215 aa).

The region spanning Val-39–Arg-107 is the KH type-2 domain.

The protein belongs to the universal ribosomal protein uS3 family. Part of the 30S ribosomal subunit. Forms a tight complex with proteins S10 and S14.

In terms of biological role, binds the lower part of the 30S subunit head. Binds mRNA in the 70S ribosome, positioning it for translation. The chain is Small ribosomal subunit protein uS3 from Nitrosomonas eutropha (strain DSM 101675 / C91 / Nm57).